The sequence spans 117 residues: Large ribosomal subunit protein bL20c (117 aa).

Belongs to the bacterial ribosomal protein bL20 family.

The protein localises to the plastid. It localises to the chloroplast. In terms of biological role, binds directly to 23S ribosomal RNA and is necessary for the in vitro assembly process of the 50S ribosomal subunit. It is not involved in the protein synthesizing functions of that subunit. The protein is Large ribosomal subunit protein bL20c of Lobularia maritima (Sweet alyssum).